The following is a 571-amino-acid chain: Proline--tRNA ligase (571 aa).

It belongs to the class-II aminoacyl-tRNA synthetase family. ProS type 1 subfamily. Homodimer.

The protein resides in the cytoplasm. The catalysed reaction is tRNA(Pro) + L-proline + ATP = L-prolyl-tRNA(Pro) + AMP + diphosphate. Catalyzes the attachment of proline to tRNA(Pro) in a two-step reaction: proline is first activated by ATP to form Pro-AMP and then transferred to the acceptor end of tRNA(Pro). As ProRS can inadvertently accommodate and process non-cognate amino acids such as alanine and cysteine, to avoid such errors it has two additional distinct editing activities against alanine. One activity is designated as 'pretransfer' editing and involves the tRNA(Pro)-independent hydrolysis of activated Ala-AMP. The other activity is designated 'posttransfer' editing and involves deacylation of mischarged Ala-tRNA(Pro). The misacylated Cys-tRNA(Pro) is not edited by ProRS. In Stutzerimonas stutzeri (strain A1501) (Pseudomonas stutzeri), this protein is Proline--tRNA ligase.